We begin with the raw amino-acid sequence, 378 residues long: MSHVDDGFRSLTLKRFPQTDDVNPLLAWEAADEYLLQQLDETEIRGPVLILNDTFGALSCALAEHSPYSIGDSYLSELGTRENLRHNGIAESSVTFLDSTADYPQAPGVVLIKVPKTLALLEQQLRALRKVVTAQTRIIAGAKARDIHTSTLELFEKVLGPTTTTLAWKKARLINCTFSHPQLADAPQTLSWKLEDTGWTIHNHANVFSRTGLDIGARFFMQHLPENLDGEIVDLGCGNGVIGLSLLAKNPQANVVFVDESPMAVDSSRLNVETNLPEAFERCEFMINNALSGVEPFRFNAVFCNPPFHQKHALTDNIAWEMFHHARRCLKINGELYIVANRHLDYFHKLKKIFGNCATIATNNKFVILKAVKQGRRR.

Belongs to the methyltransferase superfamily. RlmG family.

The protein localises to the cytoplasm. The catalysed reaction is guanosine(1835) in 23S rRNA + S-adenosyl-L-methionine = N(2)-methylguanosine(1835) in 23S rRNA + S-adenosyl-L-homocysteine + H(+). Its function is as follows. Specifically methylates the guanine in position 1835 (m2G1835) of 23S rRNA. The protein is Ribosomal RNA large subunit methyltransferase G of Salmonella paratyphi A (strain ATCC 9150 / SARB42).